The sequence spans 299 residues: Protoheme IX farnesyltransferase (299 aa).

The next 9 helical transmembrane spans lie at 25–45, 47–67, 95–115, 119–139, 147–167, 173–193, 218–238, 243–263, and 277–297; these read VVLL…RAGV, WTVL…AAAV, AAAL…LLTF, LAAW…TGFL, IVIG…AVTG, PLLL…ALAI, VHIL…FAIH, LYLA…IALY, and FSIW…YLLL.

It belongs to the UbiA prenyltransferase family. Protoheme IX farnesyltransferase subfamily.

It is found in the cell inner membrane. It catalyses the reaction heme b + (2E,6E)-farnesyl diphosphate + H2O = Fe(II)-heme o + diphosphate. It participates in porphyrin-containing compound metabolism; heme O biosynthesis; heme O from protoheme: step 1/1. Functionally, converts heme B (protoheme IX) to heme O by substitution of the vinyl group on carbon 2 of heme B porphyrin ring with a hydroxyethyl farnesyl side group. This chain is Protoheme IX farnesyltransferase, found in Stutzerimonas stutzeri (strain A1501) (Pseudomonas stutzeri).